The following is a 616-amino-acid chain: MPKYRSATTTHGRNMAGARALWRATGMTDSDFGKPIIAVVNSFTQFVPGHVHLRDLGKLVAEQIEASGGVAKEFNTIAVDDGIAMGHGGMLYSLPSRELIADSVEYMVNAHCADAMVCISNCDKITPGMLMASLRLNIPVIFVSGGPMEAGKTKLSDKIIKLDLVDAMIQGADPKVSDDQSNQVERSACPTCGSCSGMFTANSMNCLTEALGLSQPGNGSLLATHADRKQLFLNAGKRIVELTKRYYEQNDESALPRNIASKAAFENAMTLDIAMGGSTNTVLHLLAAAQEAEIDFTMSDIDKLSRKVPQLCKVAPSTQKYHMEDVHRAGGVLGILGELDRAGLLNCNVKNVLGLTLPQTLEQYDITVTQDEAVKKMFRAGPAGIRTTQAFSQDCRWDSLDDDRAAGCIRSLEYAYSKDGGLAVLYGNFAENGCIVKTAGVDDSILKFTGPAKVYESQDDAVEAILGGKVVEGDVVVIRYEGPKGGPGMQEMLYPTSFLKSMGLGKACALITDGRFSGGTSGLSIGHVSPEAASGGTIALIEDGDTIAIDIPNRSIQLQLNEAEIAARREAQEARGDKAWTPKNRQRQVSFALRAYASLATSADKGAVRDKSKLGG.

Aspartate 81 is a binding site for Mg(2+). Cysteine 122 contacts [2Fe-2S] cluster. The Mg(2+) site is built by aspartate 123 and lysine 124. Lysine 124 is modified (N6-carboxylysine). Cysteine 195 contacts [2Fe-2S] cluster. Glutamate 491 lines the Mg(2+) pocket. Serine 517 acts as the Proton acceptor in catalysis.

Belongs to the IlvD/Edd family. As to quaternary structure, homodimer. It depends on [2Fe-2S] cluster as a cofactor. Mg(2+) serves as cofactor.

It carries out the reaction (2R)-2,3-dihydroxy-3-methylbutanoate = 3-methyl-2-oxobutanoate + H2O. The catalysed reaction is (2R,3R)-2,3-dihydroxy-3-methylpentanoate = (S)-3-methyl-2-oxopentanoate + H2O. Its pathway is amino-acid biosynthesis; L-isoleucine biosynthesis; L-isoleucine from 2-oxobutanoate: step 3/4. It participates in amino-acid biosynthesis; L-valine biosynthesis; L-valine from pyruvate: step 3/4. Functions in the biosynthesis of branched-chain amino acids. Catalyzes the dehydration of (2R,3R)-2,3-dihydroxy-3-methylpentanoate (2,3-dihydroxy-3-methylvalerate) into 2-oxo-3-methylpentanoate (2-oxo-3-methylvalerate) and of (2R)-2,3-dihydroxy-3-methylbutanoate (2,3-dihydroxyisovalerate) into 2-oxo-3-methylbutanoate (2-oxoisovalerate), the penultimate precursor to L-isoleucine and L-valine, respectively. The protein is Dihydroxy-acid dehydratase of Salmonella dublin (strain CT_02021853).